The following is a 264-amino-acid chain: MGNSGFYLYNTQNCVFADNIKVGQMTEPLKDQQIILGTTSTPVAAKMTASDGISLTVSNNPSTNASITIGLDAEKAYQLILEKLGDQILGGIADTIVDSTVQDILDKITTDPSLGLLKAFNNFPITNKIQCNGLFTPRNIETLLGGTEIGKFTVTPKSSGSMFLVSADIIASRMEGGVVLALVREGDSKPYAISYGYSSGVPNLCSLRTRIINTGLTPTTYSLRVGGLESGVVWVNALSNGNDILGITNTSNVSFLEVIPQTNA.

The sequence is that of Virulence plasmid protein pGP3-D from Chlamydia trachomatis serovar L2 (strain ATCC VR-902B / DSM 19102 / 434/Bu).